The chain runs to 333 residues: Transcription initiation factor IIB (333 aa).

The segment at 33-64 adopts a TFIIB-type zinc-finger fold; it reads EVYRCPICGNDKFIYNYERGEVVCIVCGAVVQ. Zn(2+) is bound by residues C37, C40, C56, and C59. 2 consecutive repeat copies span residues 149–232 and 243–324.

It belongs to the TFIIB family.

Stabilizes TBP binding to an archaeal box-A promoter. Also responsible for recruiting RNA polymerase II to the pre-initiation complex (DNA-TBP-TFIIB). This Pyrobaculum neutrophilum (strain DSM 2338 / JCM 9278 / NBRC 100436 / V24Sta) (Thermoproteus neutrophilus) protein is Transcription initiation factor IIB.